Here is a 435-residue protein sequence, read N- to C-terminus: Glucoside xylosyltransferase 1 (435 aa).

Topologically, residues 1 to 6 (MRRYLR) are cytoplasmic. The helical; Signal-anchor for type II membrane protein transmembrane segment at 7–29 (VVGLCLACGFCSLLYAFSQLAVS) threads the bilayer. The Lumenal segment spans residues 30-435 (LEEGAAVGRR…NRYDTPPKER (406 aa)). N-linked (GlcNAc...) asparagine glycosylation is found at asparagine 168 and asparagine 232.

This sequence belongs to the glycosyltransferase 8 family.

The protein localises to the membrane. The catalysed reaction is 3-O-(beta-D-glucosyl)-L-seryl-[EGF-like domain protein] + UDP-alpha-D-xylose = 3-O-[alpha-D-xylosyl-(1-&gt;3)-beta-D-glucosyl]-L-seryl-[EGF-like domain protein] + UDP + H(+). Functionally, glycosyltransferase which elongates the O-linked glucose attached to EGF-like repeats in the extracellular domain of Notch proteins by catalyzing the addition of xylose. The protein is Glucoside xylosyltransferase 1 (Gxylt1) of Rattus norvegicus (Rat).